We begin with the raw amino-acid sequence, 302 residues long: Sulfate adenylyltransferase subunit 2 (302 aa).

The protein belongs to the PAPS reductase family. CysD subfamily. In terms of assembly, heterodimer composed of CysD, the smaller subunit, and CysN.

It catalyses the reaction sulfate + ATP + H(+) = adenosine 5'-phosphosulfate + diphosphate. It participates in sulfur metabolism; hydrogen sulfide biosynthesis; sulfite from sulfate: step 1/3. Functionally, with CysN forms the ATP sulfurylase (ATPS) that catalyzes the adenylation of sulfate producing adenosine 5'-phosphosulfate (APS) and diphosphate, the first enzymatic step in sulfur assimilation pathway. APS synthesis involves the formation of a high-energy phosphoric-sulfuric acid anhydride bond driven by GTP hydrolysis by CysN coupled to ATP hydrolysis by CysD. This is Sulfate adenylyltransferase subunit 2 from Shewanella halifaxensis (strain HAW-EB4).